The sequence spans 248 residues: MSLFRDDGIVLRTQKLGEADRIITILTRGHGRVRAVARGVRRTKSKFGARLEPFSHVDVQFFARGGELVGRGLPLCTQSETIAPYGGGIVADYARYTAGTAMLETAERFTDHEGEPAVQQYLLLVGGLRTLARGEHAPHLILDAFLLRSLAVNGYAPSFEDCAKCGMPGPNRFFSVAAGGVICGDCRVPGSVVPSAQALTLLSALLSGDWATADACEARHVREGSGLVSAYLHWHLERGLRSLRYVEK.

The protein belongs to the RecO family.

Involved in DNA repair and RecF pathway recombination. The sequence is that of DNA repair protein RecO from Streptomyces griseus subsp. griseus (strain JCM 4626 / CBS 651.72 / NBRC 13350 / KCC S-0626 / ISP 5235).